The chain runs to 416 residues: UDP-N-acetylmuramoylalanine--D-glutamate ligase (416 aa).

108-114 (GTTGKTT) serves as a coordination point for ATP.

The protein belongs to the MurCDEF family.

The protein localises to the cytoplasm. The catalysed reaction is UDP-N-acetyl-alpha-D-muramoyl-L-alanine + D-glutamate + ATP = UDP-N-acetyl-alpha-D-muramoyl-L-alanyl-D-glutamate + ADP + phosphate + H(+). It participates in cell wall biogenesis; peptidoglycan biosynthesis. In terms of biological role, cell wall formation. Catalyzes the addition of glutamate to the nucleotide precursor UDP-N-acetylmuramoyl-L-alanine (UMA). This Chlamydia trachomatis serovar L2b (strain UCH-1/proctitis) protein is UDP-N-acetylmuramoylalanine--D-glutamate ligase.